Reading from the N-terminus, the 309-residue chain is Taste receptor type 2 member 114 (309 aa).

Residues methionine 1 to glycine 7 lie on the Extracellular side of the membrane. Residues valine 8–alanine 28 form a helical membrane-spanning segment. The Cytoplasmic segment spans residues leucine 29–asparagine 43. The helical transmembrane segment at isoleucine 44–threonine 64 threads the bilayer. Residues glutamate 65–tyrosine 87 lie on the Extracellular side of the membrane. The chain crosses the membrane as a helical span at residues leucine 88 to phenylalanine 108. Residues leucine 109 to aspartate 127 are Cytoplasmic-facing. Residues leucine 128–valine 148 form a helical membrane-spanning segment. Over alanine 149 to glycine 182 the chain is Extracellular. N-linked (GlcNAc...) asparagine glycosylation occurs at asparagine 161. The chain crosses the membrane as a helical span at residues glycine 183–tryptophan 203. Residues arginine 204–serine 233 lie on the Cytoplasmic side of the membrane. The helical transmembrane segment at phenylalanine 234–isoleucine 254 threads the bilayer. Topologically, residues proline 255 to leucine 259 are extracellular. The helical transmembrane segment at leucine 260–isoleucine 280 threads the bilayer. Topologically, residues leucine 281–threonine 309 are cytoplasmic.

This sequence belongs to the G-protein coupled receptor T2R family.

The protein localises to the membrane. In terms of biological role, putative taste receptor which may play a role in the perception of bitterness. In Mus musculus (Mouse), this protein is Taste receptor type 2 member 114.